Consider the following 2326-residue polypeptide: Telomere-associated protein RIF1 (2326 aa).

Disordered regions lie at residues 381-410 (QGTP…SPAT), 1105-1965 (YTQS…CITP), and 1993-2050 (VENK…DDSL). A compositionally biased stretch (polar residues) spans 382–396 (GTPSRVPSNPNSANP). Composition is skewed to basic and acidic residues over residues 1112 to 1126 (SLEK…EDFK) and 1150 to 1182 (CKVD…RGDR). Low complexity predominate over residues 1216–1225 (SAISCSSTSS). 2 stretches are compositionally biased toward polar residues: residues 1233-1242 (QPASRRQSFI) and 1252-1270 (SRPF…SQSA). Basic and acidic residues predominate over residues 1290–1299 (KSGEESRKSS). 2 stretches are compositionally biased toward polar residues: residues 1318–1332 (MEQQ…VTNS) and 1341–1353 (SFVS…SPES). Over residues 1376–1402 (PDIKKAEAVMAEIEKVRAFEMDSKENT) the composition is skewed to basic and acidic residues. A compositionally biased stretch (polar residues) spans 1403–1412 (PPKTAVSSEQ). Basic and acidic residues-rich tracts occupy residues 1448 to 1480 (QDKE…DASQ), 1489 to 1511 (ASEH…DLGS), and 1519 to 1539 (GADE…KSDS). Residues 1564 to 1573 (SSQGLLSSIE) show a composition bias toward polar residues. A compositionally biased stretch (basic residues) spans 1586 to 1595 (SLKKKSGKTK). A compositionally biased stretch (basic and acidic residues) spans 1596 to 1609 (NKSDSLEGKRKDVQ). Polar residues-rich tracts occupy residues 1610-1640 (PESQ…SEVS) and 1671-1683 (RTSP…SVEQ). A compositionally biased stretch (basic and acidic residues) spans 1697–1712 (RVSDEVLKGDENKCIE). The segment covering 1713–1745 (KQSSVEQHSSVQPENVQGANTSGSDLSSLQMQD) has biased composition (polar residues). Residues 1776 to 1785 (SKSEDPRELI) show a composition bias toward basic and acidic residues. The span at 1795 to 1813 (AVSTAEVSGSSNLEESLSI) shows a compositional bias: polar residues. 3 stretches are compositionally biased toward basic and acidic residues: residues 1869-1884 (VEIK…DRAE), 1908-1925 (SEEK…HGEM), and 1932-1954 (DGSK…KEEA). Polar residues predominate over residues 2009–2036 (SFTSVNGSPSGVQARCTWSPSASPSTSI).

This sequence belongs to the RIF1 family. Interacts with TP53BP1 (when phosphorylated by ATM).

It is found in the nucleus. The protein resides in the chromosome. Its subcellular location is the telomere. The protein localises to the cytoplasm. It localises to the cytoskeleton. It is found in the spindle. Its function is as follows. Key regulator of TP53BP1 that plays a key role in the repair of double-strand DNA breaks (DSBs) in response to DNA damage: acts by promoting non-homologous end joining (NHEJ)-mediated repair of DSBs. In response to DNA damage, interacts with ATM-phosphorylated TP53BP1, allowing recruitment to DNA DSBs. Once recruited to DSBs, RIF1 and TP53BP1 act by promoting NHEJ-mediated repair of DSBs. In the same time, RIF1 and TP53BP1 specifically counteract DSBs resection via homologous recombination (HR) during G1 phase. The sequence is that of Telomere-associated protein RIF1 from Gallus gallus (Chicken).